Consider the following 322-residue polypeptide: Ribosomal RNA small subunit methyltransferase H (322 aa).

S-adenosyl-L-methionine contacts are provided by residues 47 to 49 (GGH), aspartate 67, phenylalanine 93, aspartate 112, and glutamine 119.

The protein belongs to the methyltransferase superfamily. RsmH family.

The protein resides in the cytoplasm. It catalyses the reaction cytidine(1402) in 16S rRNA + S-adenosyl-L-methionine = N(4)-methylcytidine(1402) in 16S rRNA + S-adenosyl-L-homocysteine + H(+). Functionally, specifically methylates the N4 position of cytidine in position 1402 (C1402) of 16S rRNA. This chain is Ribosomal RNA small subunit methyltransferase H, found in Stenotrophomonas maltophilia (strain K279a).